The primary structure comprises 149 residues: MKKATLVIGVIGADCHAVGNKVLDRVFSNHDFRVINLGVMVSQDEYIDAAIETGADAIVVSSIYGHGDIDCLGMRERCIERGLGDILLYVGGNLVVGKHDFADVETKFKEMGFDRVFAPSHDLEDVCQLMAHDINQRHDVDTRILEEAI.

The B12-binding domain occupies 3 to 140 (KATLVIGVIG…AHDINQRHDV (138 aa)). Adenosylcob(III)alamin is bound by residues 13–17 (ADCHA), H16, 61–63 (SSI), and 93–97 (NLVVG).

Belongs to the methylaspartate mutase GlmS subunit family. In terms of assembly, heterotetramer composed of 2 epsilon subunits (GlmE) and 2 sigma subunits (GlmS). GlmE exists as a homodimer and GlmS as a monomer. Adenosylcob(III)alamin serves as cofactor.

The enzyme catalyses (2S,3S)-3-methyl-L-aspartate = L-glutamate. Its pathway is amino-acid degradation; L-glutamate degradation via mesaconate pathway; acetate and pyruvate from L-glutamate: step 1/4. Functionally, catalyzes the carbon skeleton rearrangement of L-glutamate to L-threo-3-methylaspartate ((2S,3S)-3-methylaspartate). The sequence is that of Glutamate mutase sigma subunit from Escherichia coli O157:H7.